The primary structure comprises 95 residues: Aspartyl/glutamyl-tRNA(Asn/Gln) amidotransferase subunit C (95 aa).

Belongs to the GatC family. In terms of assembly, heterotrimer of A, B and C subunits.

The catalysed reaction is L-glutamyl-tRNA(Gln) + L-glutamine + ATP + H2O = L-glutaminyl-tRNA(Gln) + L-glutamate + ADP + phosphate + H(+). The enzyme catalyses L-aspartyl-tRNA(Asn) + L-glutamine + ATP + H2O = L-asparaginyl-tRNA(Asn) + L-glutamate + ADP + phosphate + 2 H(+). In terms of biological role, allows the formation of correctly charged Asn-tRNA(Asn) or Gln-tRNA(Gln) through the transamidation of misacylated Asp-tRNA(Asn) or Glu-tRNA(Gln) in organisms which lack either or both of asparaginyl-tRNA or glutaminyl-tRNA synthetases. The reaction takes place in the presence of glutamine and ATP through an activated phospho-Asp-tRNA(Asn) or phospho-Glu-tRNA(Gln). The sequence is that of Aspartyl/glutamyl-tRNA(Asn/Gln) amidotransferase subunit C from Pseudomonas syringae pv. syringae (strain B728a).